The sequence spans 172 residues: Ly6/PLAUR domain-containing protein 6B (172 aa).

Positions 1 to 25 (MLLLCHILAVTILQILIISENWVFA) are cleaved as a signal peptide. Positions 46-137 (FKCFTCENAG…VELPTNHTNA (92 aa)) constitute a UPAR/Ly6 domain. The segment at 46–140 (FKCFTCENAG…PTNHTNAVFA (95 aa)) is sufficient for inhibiting alpha-7 nAChR currents. 6 cysteine pairs are disulfide-bonded: Cys-48-Cys-76, Cys-51-Cys-60, Cys-69-Cys-95, Cys-101-Cys-120, Cys-106-Cys-117, and Cys-121-Cys-126. Residue Ser-148 is the site of GPI-anchor amidated serine attachment. The propeptide at 149-172 (GSSVSSVPSPYLLVLAWLFMLPLL) is removed in mature form.

It is found in the cell membrane. Likely acts as a modulator of nicotinic acetylcholine receptors (nAChRs) activity. In vitro acts on nAChRs in a subtype- and stoichiometry-dependent manner. Modulates specifically alpha-3(3):beta-4(2) nAChRs by enhancing the sensitivity to ACh, decreasing ACh-induced maximal current response and increasing the rate of desensitization to ACh; has no effect on alpha-7 homomeric nAChRs; modulates alpha-3(2):alpha-5:beta-4(2) nAChRs in the context of CHRNA5/alpha-5 variant Asn-398 but not its wild-type sequence. However, according to another report in vitro it can weakly inhibits alpha-7 nAChRs. The sequence is that of Ly6/PLAUR domain-containing protein 6B (Lypd6b) from Mus musculus (Mouse).